Reading from the N-terminus, the 210-residue chain is Large ribosomal subunit protein uL3 (210 aa).

The segment at 120–143 is disordered; that stretch reads FQGNIKKDGQSRGPMGHGSRYHRR.

This sequence belongs to the universal ribosomal protein uL3 family. As to quaternary structure, part of the 50S ribosomal subunit. Forms a cluster with proteins L14 and L19.

One of the primary rRNA binding proteins, it binds directly near the 3'-end of the 23S rRNA, where it nucleates assembly of the 50S subunit. This Latilactobacillus sakei subsp. sakei (strain 23K) (Lactobacillus sakei subsp. sakei) protein is Large ribosomal subunit protein uL3.